The sequence spans 364 residues: tRNA/tmRNA (uracil-C(5))-methyltransferase (364 aa).

S-adenosyl-L-methionine contacts are provided by glutamine 188, tyrosine 216, asparagine 221, glutamate 237, and aspartate 297. The Nucleophile role is filled by cysteine 322. Glutamate 356 (proton acceptor) is an active-site residue.

It belongs to the class I-like SAM-binding methyltransferase superfamily. RNA M5U methyltransferase family. TrmA subfamily.

It carries out the reaction uridine(54) in tRNA + S-adenosyl-L-methionine = 5-methyluridine(54) in tRNA + S-adenosyl-L-homocysteine + H(+). The catalysed reaction is uridine(341) in tmRNA + S-adenosyl-L-methionine = 5-methyluridine(341) in tmRNA + S-adenosyl-L-homocysteine + H(+). In terms of biological role, dual-specificity methyltransferase that catalyzes the formation of 5-methyluridine at position 54 (m5U54) in all tRNAs, and that of position 341 (m5U341) in tmRNA (transfer-mRNA). The sequence is that of tRNA/tmRNA (uracil-C(5))-methyltransferase from Mannheimia succiniciproducens (strain KCTC 0769BP / MBEL55E).